We begin with the raw amino-acid sequence, 271 residues long: 4-hydroxy-tetrahydrodipicolinate reductase (271 aa).

Residues 11–16 (GGSGRM) and glutamate 37 contribute to the NAD(+) site. Arginine 38 contacts NADP(+). NAD(+) is bound by residues 101-103 (GTT) and 125-128 (APNM). The Proton donor/acceptor role is filled by histidine 158. Residue histidine 159 participates in (S)-2,3,4,5-tetrahydrodipicolinate binding. Lysine 162 acts as the Proton donor in catalysis. 168–169 (GT) provides a ligand contact to (S)-2,3,4,5-tetrahydrodipicolinate.

It belongs to the DapB family.

It is found in the cytoplasm. The enzyme catalyses (S)-2,3,4,5-tetrahydrodipicolinate + NAD(+) + H2O = (2S,4S)-4-hydroxy-2,3,4,5-tetrahydrodipicolinate + NADH + H(+). The catalysed reaction is (S)-2,3,4,5-tetrahydrodipicolinate + NADP(+) + H2O = (2S,4S)-4-hydroxy-2,3,4,5-tetrahydrodipicolinate + NADPH + H(+). Its pathway is amino-acid biosynthesis; L-lysine biosynthesis via DAP pathway; (S)-tetrahydrodipicolinate from L-aspartate: step 4/4. Functionally, catalyzes the conversion of 4-hydroxy-tetrahydrodipicolinate (HTPA) to tetrahydrodipicolinate. The chain is 4-hydroxy-tetrahydrodipicolinate reductase from Shewanella piezotolerans (strain WP3 / JCM 13877).